The chain runs to 1035 residues: Beta-galactosidase (1035 aa).

Residues N101 and D199 each contribute to the substrate site. D199 contributes to the Na(+) binding site. Residues E415, H417, and E460 each coordinate Mg(2+). Substrate is bound by residues E460 and E540–H543. The active-site Proton donor is the E460. E540 acts as the Nucleophile in catalysis. N600 contributes to the Mg(2+) binding site. Positions 604 and 607 each coordinate Na(+). Residues N607 and W1011 each coordinate substrate.

It belongs to the glycosyl hydrolase 2 family. As to quaternary structure, homotetramer. Mg(2+) serves as cofactor. Requires Na(+) as cofactor.

The catalysed reaction is Hydrolysis of terminal non-reducing beta-D-galactose residues in beta-D-galactosides.. The sequence is that of Beta-galactosidase from Psychromonas ingrahamii (strain DSM 17664 / CCUG 51855 / 37).